Consider the following 1291-residue polypeptide: 1-phosphatidylinositol 4,5-bisphosphate phosphodiesterase gamma-1 (1291 aa).

Ala-2 is modified (N-acetylalanine). Positions Arg-27–Glu-142 constitute a PH 1 domain. The 36-residue stretch at Gln-152–Arg-187 folds into the EF-hand domain. Asp-165, Asn-167, Glu-169, Arg-171, and Asp-176 together coordinate Ca(2+). Residues Asp-320–Lys-464 form the PI-PLC X-box domain. Catalysis depends on residues His-335 and His-380. The region spanning Ser-489–Thr-523 is the PH 2; first part domain. Position 506 is a phosphotyrosine (Tyr-506). The disordered stretch occupies residues Glu-522–Leu-544. SH2 domains lie at Trp-550–Val-657 and Trp-668–Ile-756. Residue Tyr-771 is modified to Phosphotyrosine; by SYK. Phosphotyrosine is present on residues Tyr-775 and Tyr-783. The residue at position 783 (Tyr-783) is a Phosphotyrosine; by ITK, SYK and TXK. The region spanning Thr-791 to Ser-851 is the SH3 domain. In terms of domain architecture, PH 2; second part spans Phe-895–Gln-931. A PI-PLC Y-box domain is found at Leu-953–Arg-1070. Tyr-977 carries the phosphotyrosine modification. One can recognise a C2 domain in the interval Asp-1071 to Asn-1194. A phosphoserine mark is found at Ser-1222, Ser-1228, and Ser-1249. Tyr-1254 is modified (phosphotyrosine). Ser-1264 is modified (phosphoserine). The interval His-1271–Leu-1291 is disordered.

As to quaternary structure, interacts with AGAP2 via its SH3 domain. Interacts (via SH2 domain) with RET. Interacts with FLT1 (tyrosine-phosphorylated). Interacts (via SH2 domain) with FGFR1, FGFR2, FGFR3 and FGFR4 (phosphorylated). Interacts with LAT (phosphorylated) upon TCR activation. Interacts (via SH3 domain) with the Pro-rich domain of TNK1. Associates with BLNK, VAV1, GRB2 and NCK1 in a B-cell antigen receptor-dependent fashion. Interacts with CBLB in activated T-cells; which inhibits phosphorylation. Interacts with SHB. Interacts (via SH3 domain) with the Arg/Gly-rich-flanked Pro-rich domains of KHDRBS1/SAM68. This interaction is selectively regulated by arginine methylation of KHDRBS1/SAM68. Interacts with INPP5D/SHIP1, THEMIS and CLNK. Interacts with AXL, FLT4 and KIT. Interacts with RALGPS1. Interacts (via the SH2 domains) with VIL1 (phosphorylated at C-terminus tyrosine phosphorylation sites). Interacts (via SH2 domain) with PDGFRA and PDGFRB (tyrosine phosphorylated). Interacts with PIP5K1C. Interacts with NTRK1 and NTRK2 (phosphorylated upon ligand-binding). Interacts with SYK; activates PLCG1. Interacts with GRB2, LAT and THEMIS upon TCR activation in thymocytes. Interacts with TESPA1; the association is increased with prolonged stimulation of the TCR and may facilitate the assembly of the LAT signalosome. Interacts (via C-terminal proline-rich domain (PRD)) with PLCG1 (via SH3 domain); this interaction leads to guanine nucleotide exchange from PlCG1 to DNM1 and enhances DNM1-dependent endocytosis. The cofactor is Ca(2+). Ubiquitinated by CBLB in activated T-cells. Post-translationally, tyrosine phosphorylated in response to signaling via activated FLT3, KIT and PDGFRA. Tyrosine phosphorylated by activated FGFR1, FGFR2, FGFR3 and FGFR4. Tyrosine phosphorylated by activated FLT1 and KDR. Tyrosine phosphorylated by activated PDGFRB. The receptor-mediated activation of PLCG1 involves its phosphorylation by tyrosine kinases, in response to ligation of a variety of growth factor receptors and immune system receptors. For instance, SYK phosphorylates and activates PLCG1 in response to ligation of the B-cell receptor. May be dephosphorylated by PTPRJ. Phosphorylated by ITK and TXK on Tyr-783 upon TCR activation in T-cells.

The protein localises to the cell projection. It is found in the lamellipodium. The protein resides in the ruffle. The enzyme catalyses a 1,2-diacyl-sn-glycero-3-phospho-(1D-myo-inositol-4,5-bisphosphate) + H2O = 1D-myo-inositol 1,4,5-trisphosphate + a 1,2-diacyl-sn-glycerol + H(+). It catalyses the reaction a 1,2-diacyl-sn-glycero-3-phospho-(1D-myo-inositol) + H2O = 1D-myo-inositol 1-phosphate + a 1,2-diacyl-sn-glycerol + H(+). Activated by phosphorylation on tyrosine residues. In terms of biological role, mediates the production of the second messenger molecules diacylglycerol (DAG) and inositol 1,4,5-trisphosphate (IP3). Plays an important role in the regulation of intracellular signaling cascades. Becomes activated in response to ligand-mediated activation of receptor-type tyrosine kinases, such as PDGFRA, PDGFRB, EGFR, FGFR1, FGFR2, FGFR3 and FGFR4. Plays a role in actin reorganization and cell migration. Guanine nucleotide exchange factor that binds the GTPase DNM1 and catalyzes the dissociation of GDP, allowing a GTP molecule to bind in its place, therefore enhancing DNM1-dependent endocytosis. The polypeptide is 1-phosphatidylinositol 4,5-bisphosphate phosphodiesterase gamma-1 (Bos taurus (Bovine)).